The sequence spans 404 residues: Arginine biosynthesis bifunctional protein ArgJ (404 aa).

The substrate site is built by T166, K189, T200, E280, N399, and S404. T200 acts as the Nucleophile in catalysis.

It belongs to the ArgJ family. As to quaternary structure, heterotetramer of two alpha and two beta chains.

The protein resides in the cytoplasm. The enzyme catalyses N(2)-acetyl-L-ornithine + L-glutamate = N-acetyl-L-glutamate + L-ornithine. The catalysed reaction is L-glutamate + acetyl-CoA = N-acetyl-L-glutamate + CoA + H(+). Its pathway is amino-acid biosynthesis; L-arginine biosynthesis; L-ornithine and N-acetyl-L-glutamate from L-glutamate and N(2)-acetyl-L-ornithine (cyclic): step 1/1. The protein operates within amino-acid biosynthesis; L-arginine biosynthesis; N(2)-acetyl-L-ornithine from L-glutamate: step 1/4. In terms of biological role, catalyzes two activities which are involved in the cyclic version of arginine biosynthesis: the synthesis of N-acetylglutamate from glutamate and acetyl-CoA as the acetyl donor, and of ornithine by transacetylation between N(2)-acetylornithine and glutamate. In Mycobacterium bovis (strain ATCC BAA-935 / AF2122/97), this protein is Arginine biosynthesis bifunctional protein ArgJ.